A 1548-amino-acid polypeptide reads, in one-letter code: Nuclear factor of activated T-cells 5 (1548 aa).

Residues 54 to 106 form a disordered region; sequence QLPPPRETSAASMSQTSGGEAGSPPPAVVAADASSAPSSSMGGACSSFTTSSS. A compositionally biased stretch (low complexity) spans 81–106; sequence VVAADASSAPSSSMGGACSSFTTSSS. Ser-137 carries the post-translational modification Phosphoserine. The residue at position 139 (Lys-139) is an N6-acetyllysine. Over residues 141–151 the composition is skewed to polar residues; the sequence is LTGNTVQQHPS. Disordered stretches follow at residues 141-180, 192-237, and 258-282; these read LTGN…QDEG, WMED…CEES, and TTDN…GVKK. Ser-151 carries the phosphoserine modification. Position 152 is a phosphothreonine; by CDK5 (Thr-152). Ser-172 carries the phosphoserine modification. Residues 196–209 are compositionally biased toward low complexity; the sequence is SPSNFSNMSTSSYN. Residues 217–229 show a composition bias toward basic residues; that stretch reads KSRKRNPKQRPGV. Over residues 258–277 the composition is skewed to polar residues; it reads TTDNKGNSKAGNGTLDSQKG. The region spanning 281–460 is the RHD domain; sequence KKSPMLCGQY…SPILCTQPAG (180 aa). The DNA-binding element occupies 310–317; the sequence is RARYLTEG. A Glycyl lysine isopeptide (Lys-Gly) (interchain with G-Cter in SUMO1); alternate cross-link involves residue Lys-572. Residue Lys-572 forms a Glycyl lysine isopeptide (Lys-Gly) (interchain with G-Cter in SUMO2); alternate linkage. Ser-577 is subject to Phosphoserine. Lys-619 is covalently cross-linked (Glycyl lysine isopeptide (Lys-Gly) (interchain with G-Cter in SUMO2)). 6 disordered regions span residues 659–682, 750–777, 851–892, 970–1010, 1097–1127, and 1257–1388; these read GNAS…QQLQ, TEAP…PNSV, PGMF…QQQQ, SPPA…GAQA, LSQE…QLQP, and MQSN…QEQQ. 2 stretches are compositionally biased toward low complexity: residues 662–672 and 751–765; these read SFSSPSSSHLS and EAPQ…EQAQ. Polar residues-rich tracts occupy residues 766-777, 851-860, and 876-886; these read IPSNIFPSPNSV, PGMFSSTESA, and VHQQTENTLSS. Low complexity predominate over residues 979–993; the sequence is TSTTTTPQVATPGST. A compositionally biased stretch (polar residues) spans 1113–1127; it reads VHSQTSTASSEQLQP. The span at 1264–1283 shows a compositional bias: low complexity; it reads QEQQQQQQQQQQQQQQQQQQ. Composition is skewed to polar residues over residues 1284–1300 and 1308–1333; these read SILF…ASQK and FSPN…SNMA. The segment covering 1334–1348 has biased composition (low complexity); it reads PMNQEQQPMQFQNQP. Over residues 1349-1388 the composition is skewed to polar residues; that stretch reads TVSSLQNPGPTPSESPQTSLFHSSPQIQLVQGSPSSQEQQ.

In terms of assembly, homodimer when bound to DNA, completely encircles its DNA target. Interacts with CIDEC; this interaction is direct and retains NFAT5 in the cytoplasm. Does not bind with Fos and Jun transcription factors. Interacts with DDX5 and DDX17; this interaction leads to DDX5/DDX17 recruitment to LNC2 and S100A4 promoters and NFAT5-mediated DDX5/DDX17-enhanced transactivation. Phosphorylated. Phosphorylated at Thr-152 by CDK5 in response to osmotic stress; this phosphorylation mediates its rapid nuclear localization. In terms of processing, poly-ADP-ribosylated by PARP1 in response to DNA damage, promoting recruitment to sites of R-loop-associated DNA damage.

The protein resides in the nucleus. It is found in the cytoplasm. Its subcellular location is the chromosome. Functionally, transcription factor involved, among others, in the transcriptional regulation of osmoprotective and inflammatory genes. Binds the DNA consensus sequence 5'-[ACT][AG]TGGAAA[CAT]A[TA][ATC][CA][ATG][GT][GAC][CG][CT]-3'. Mediates the transcriptional response to hypertonicity. Positively regulates the transcription of LCN2 and S100A4 genes; optimal transactivation of these genes requires the presence of DDX5/DDX17. Also involved in the DNA damage response by preventing formation of R-loops; R-loops are composed of a DNA:RNA hybrid and the associated non-template single-stranded DNA. The sequence is that of Nuclear factor of activated T-cells 5 (Nfat5) from Rattus norvegicus (Rat).